The following is a 507-amino-acid chain: Monoogygenase CPUR_05431 (507 aa).

It belongs to the PheA/TfdB FAD monooxygenase family. It depends on FAD as a cofactor.

It functions in the pathway pigment biosynthesis. In terms of biological role, monoogygenase; part of the ergochrome gene cluster responsible for the typical purple-black color of the ergot sclerotia. The ergochrome gene cluster produces several ergot pigments including the yellow ergochrome secalonic acid and its derivatives, as well as the red anthraquinones endocrocin and clavorubin. The pathway begins with the synthesis of atrochrysone thioester by the polyketide synthase (PKS) CPUR_05437. The atrochrysone carboxyl ACP thioesterase CPUR_05436 then breaks the thioester bond and releases the atrochrysone carboxylic acid from CPUR_05437. The atrochrysone carboxylic acid is then converted to atrochrysone which is further transformed into emodin anthrone. The next step is performed by the anthrone oxygenase CPUR_05434 that catalyzes the oxidation of emodinanthrone to emodin. Emodin is further modified to yield monodictyphenone via several steps involving CPUR_05427, CPUR_05428, CPUR_05429 and CPUR_05430. The short chain dehydrogenase/reductase CPUR_05418 then catalyzes the C-5 ketoreduction to give the xanthone skeleton of the monomeric units. Ergochromes formation requires further dimerization steps of different xanthone units, probably catalyzed by the cytochrome P450 monooxygenase CPUR_05419. CPUR_05425, CPUR_05426 and CPUR_05431 are unique to Claviceps, thus it is likely that they are involved in further modification of xanthone units or in their dimerization. The yellow ergochromes and the red anthraquinone pigments endocrocin and clavorubin are products from the same PKS derived precursors and the latter are likely shunt products in the pathway of xanthone biosynthesis. It is proposed that atrochrysone carboxylic acid released from the PKS CPUR_05437 can also be converted to endocrocin anthrone which is further oxidized into endocrocin by CPUR_05435. Endocrocin could be then modified to clavorubin, possibly by CPUR_05423 and CPUR_05431. Clavorubin is the principal anthraquinone metabolite produced by the cluster with a much higher yield compared to endocrocin. This is Monoogygenase CPUR_05431 from Claviceps purpurea (strain 20.1) (Ergot fungus).